Here is a 517-residue protein sequence, read N- to C-terminus: B3 domain-containing protein REM1 (517 aa).

The segment at residues 7-92 is a DNA-binding region (TF-B3 1); it reads FSLFQQKFRT…VFHVAVVSPS (86 aa). A compositionally biased stretch (acidic residues) spans 115–140; sequence DDVDDDDYGQDDEDDDDDDDEGEDNI. A disordered region spans residues 115–158; it reads DDVDDDDYGQDDEDDDDDDDEGEDNIENISEKTDKRQEADSSSD. Residues 143 to 157 are compositionally biased toward basic and acidic residues; sequence ISEKTDKRQEADSSS. 2 consecutive DNA-binding regions (TF-B3) follow at residues 162 to 259 and 285 to 385; these read FITA…CPQE and FLIV…FCSK. The tract at residues 393–415 is disordered; sequence GKGNQRTRKKRACETAPQPRNVK.

Expressed in the shoot apical meristem (SAM), in the inflorescence apex and flowers.

It localises to the nucleus. In terms of biological role, may play a role in flower development. This chain is B3 domain-containing protein REM1 (REM1), found in Arabidopsis thaliana (Mouse-ear cress).